Consider the following 294-residue polypeptide: Endonuclease 3 (294 aa).

Positions 1-24 are cleaved as a signal peptide; the sequence is MGWSLRMWIVSILVLTQLVNGALC. 2 residues coordinate a divalent metal cation: W25 and H30. 25–30 provides a ligand contact to substrate; it reads WGDAGH. A disulfide bridge connects residues C34 and C65. Positions 69 and 84 each coordinate a divalent metal cation. Substrate-binding positions include 69–75, 84–87, and 94–99; these read DEIKKLP, HFAD, and NYEYSR. 3 cysteine pairs are disulfide-bonded: C93–C241, C101–C106, and C221–C228. The substrate site is built by N113 and Y131. N-linked (GlcNAc...) asparagine glycosylation is present at N113. N132 carries N-linked (GlcNAc...) asparagine glycosylation. H142, D146, H152, H176, and D180 together coordinate a divalent metal cation. The substrate binding stretch occupies residues 142-191; that stretch reads HYMGDIHQPLHEGFIGDLGGNKIKVHWYNQETNLHRVWDDMIIESALETY. N-linked (GlcNAc...) asparagine glycosylation is found at N193, N224, and N247. Positions 279-294 are cleaved as a propeptide — removed in mature form; it reads GTLNRIFSAKRKLARA.

The protein belongs to the nuclease type I family. Monomer. The cofactor is Zn(2+). Mn(2+) is required as a cofactor.

It catalyses the reaction Endonucleolytic cleavage to 5'-phosphomononucleotide and 5'-phosphooligonucleotide end-products.. In terms of biological role, endonuclease that can use RNA and single-stranded DNA as substrates. In contradiction with PubMed:23620482, cannot hydrolyze single-stranded DNA and does not cleave mismatches. This is Endonuclease 3 from Arabidopsis thaliana (Mouse-ear cress).